The following is a 179-amino-acid chain: MSRIGKKILEIPAGVTITVAEDNTVTVKGPKGELTRTFNADMLIKIEENTLTVERPSEQKEHRALHGTTRALIGNMVEGVTEGFARGLELVGVGYRAQKQGDKLVLSVGYSHPVEMTPEAGLEVEVPAPTKIVIKGIDKQRVGEFAANIRAVRAPEPYKGKGIRYEGEVVRRKEGKTAK.

It belongs to the universal ribosomal protein uL6 family. In terms of assembly, part of the 50S ribosomal subunit.

In terms of biological role, this protein binds to the 23S rRNA, and is important in its secondary structure. It is located near the subunit interface in the base of the L7/L12 stalk, and near the tRNA binding site of the peptidyltransferase center. This Bacillus anthracis protein is Large ribosomal subunit protein uL6.